The primary structure comprises 518 residues: Cytochrome P450 736A117 (518 aa).

N-linked (GlcNAc...) asparagine glycosylation is present at Asn12. Residues 17 to 37 traverse the membrane as a helical segment; sequence FLQPLAFTLLAIFLVLLYTWY. Asn185, Asn275, and Asn356 each carry an N-linked (GlcNAc...) asparagine glycan. Cys460 is a heme binding site.

It belongs to the cytochrome P450 family. Requires heme as cofactor. In terms of tissue distribution, expressed at similar levels in fruit kernel, seedlings, leaves, stems and buds.

The protein localises to the membrane. The chain is Cytochrome P450 736A117 from Prunus mume (Japanese apricot).